The chain runs to 288 residues: Protoheme IX farnesyltransferase (288 aa).

9 helical membrane passes run 16 to 36, 37 to 57, 88 to 108, 111 to 131, 138 to 158, 162 to 182, 210 to 230, 236 to 256, and 265 to 285; these read VWSL…NRFT, LTNI…SMGA, VKGL…LLFF, YLAA…YSYL, WNII…WYTV, FSVL…IHVW, AICI…PVFF, TYMI…VLFV, and LKLF…VLIF.

It belongs to the UbiA prenyltransferase family. Protoheme IX farnesyltransferase subfamily.

It is found in the cell membrane. It catalyses the reaction heme b + (2E,6E)-farnesyl diphosphate + H2O = Fe(II)-heme o + diphosphate. It functions in the pathway porphyrin-containing compound metabolism; heme O biosynthesis; heme O from protoheme: step 1/1. Functionally, converts heme B (protoheme IX) to heme O by substitution of the vinyl group on carbon 2 of heme B porphyrin ring with a hydroxyethyl farnesyl side group. The sequence is that of Protoheme IX farnesyltransferase from Thermoplasma volcanium (strain ATCC 51530 / DSM 4299 / JCM 9571 / NBRC 15438 / GSS1).